A 356-amino-acid polypeptide reads, in one-letter code: Histidinol-phosphate aminotransferase (356 aa).

Lys214 is modified (N6-(pyridoxal phosphate)lysine).

Belongs to the class-II pyridoxal-phosphate-dependent aminotransferase family. Histidinol-phosphate aminotransferase subfamily. In terms of assembly, homodimer. The cofactor is pyridoxal 5'-phosphate.

The enzyme catalyses L-histidinol phosphate + 2-oxoglutarate = 3-(imidazol-4-yl)-2-oxopropyl phosphate + L-glutamate. It participates in amino-acid biosynthesis; L-histidine biosynthesis; L-histidine from 5-phospho-alpha-D-ribose 1-diphosphate: step 7/9. This Escherichia coli O1:K1 / APEC protein is Histidinol-phosphate aminotransferase.